The following is a 499-amino-acid chain: Flotillin-like protein 2 (499 aa).

Residue Cys37 is the site of S-palmitoyl cysteine attachment. A coiled-coil region spans residues 243 to 319; the sequence is LREEAKVKAE…LRLTEKLKAE (77 aa).

The protein belongs to the band 7/mec-2 family. Flotillin subfamily. May be palmitoylated.

It localises to the cell membrane. Its subcellular location is the membrane. It is found in the caveola. May act as a scaffolding protein within caveolar membranes, functionally participating in formation of caveolae or caveolae-like vesicles. This chain is Flotillin-like protein 2 (FLOT2), found in Oryza sativa subsp. japonica (Rice).